A 283-amino-acid polypeptide reads, in one-letter code: Bis(5'-nucleosyl)-tetraphosphatase, symmetrical (283 aa).

This sequence belongs to the Ap4A hydrolase family.

It catalyses the reaction P(1),P(4)-bis(5'-adenosyl) tetraphosphate + H2O = 2 ADP + 2 H(+). Functionally, hydrolyzes diadenosine 5',5'''-P1,P4-tetraphosphate to yield ADP. This chain is Bis(5'-nucleosyl)-tetraphosphatase, symmetrical, found in Serratia proteamaculans (strain 568).